The following is a 490-amino-acid chain: Betaine aldehyde dehydrogenase (490 aa).

2 residues coordinate K(+): isoleucine 27 and aspartate 93. 150-152 (GAW) contacts NAD(+). Lysine 162 (charge relay system) is an active-site residue. 176 to 179 (KPSE) provides a ligand contact to NAD(+). Valine 180 contacts K(+). Position 230 to 233 (230 to 233 (GTTT)) interacts with NAD(+). Leucine 246 contributes to the K(+) binding site. Catalysis depends on glutamate 252, which acts as the Proton acceptor. Glycine 254, cysteine 286, and glutamate 387 together coordinate NAD(+). Catalysis depends on cysteine 286, which acts as the Nucleophile. Cysteine 286 is subject to Cysteine sulfenic acid (-SOH). Positions 457 and 460 each coordinate K(+). The Charge relay system role is filled by glutamate 464.

It belongs to the aldehyde dehydrogenase family. Dimer of dimers. Requires K(+) as cofactor.

It catalyses the reaction betaine aldehyde + NAD(+) + H2O = glycine betaine + NADH + 2 H(+). Its pathway is amine and polyamine biosynthesis; betaine biosynthesis via choline pathway; betaine from betaine aldehyde: step 1/1. Functionally, involved in the biosynthesis of the osmoprotectant glycine betaine. Catalyzes the irreversible oxidation of betaine aldehyde to the corresponding acid. This is Betaine aldehyde dehydrogenase from Pseudomonas putida (strain GB-1).